The chain runs to 390 residues: MISNQDNIIQVSAPGKIILFGEHAVVLEKTAIASALSLRTTVTFTPNTNNTLLLDFPDLAGFGVREWSLDEFKKLDHFPNDIDILKPIECSELFQQELNKIIDIKGIHTFLFLFCALTKCTKAYNIKITSDLPIGAGLGSSASFCVSICAGLLKAFDTYICGGCKQCIGGQGQQQQICNEQLNLINLWSLQGEKIMHGTPSGIDNAVATFGKALTFTRKNGYKILENGIPPLRILITNTRVSRSTKTLVEGVIQRSKLYPTLIDPVSNLIDTISSQCIESFNQYHTDKDYEKLQQTMDLMFDMNQHLLSGCYGVGHSSIDTIVSITKSLGFHTKLTGAGGGGCVITLLKQDTTIDQLSNLKLTLSSNGFESWEATIGDPGVSINILPIQK.

Residues Lys16, Ser130, and Gly135–Ser141 contribute to the ATP site. Mg(2+) contacts are provided by Ser141 and Glu193. Asp204 serves as the catalytic Proton acceptor.

Belongs to the GHMP kinase family. Mevalonate kinase subfamily. Mg(2+) serves as cofactor.

The protein resides in the cytoplasm. The enzyme catalyses (R)-mevalonate + ATP = (R)-5-phosphomevalonate + ADP + H(+). The protein operates within isoprenoid biosynthesis; isopentenyl diphosphate biosynthesis via mevalonate pathway; isopentenyl diphosphate from (R)-mevalonate: step 1/3. Catalyzes the phosphorylation of mevalonate to mevalonate 5-phosphate, a key step in isoprenoid biosynthesis. This Dictyostelium discoideum (Social amoeba) protein is Mevalonate kinase.